The following is an 827-amino-acid chain: Multiphosphoryl transfer protein (827 aa).

The 141-residue stretch at 2-142 (IPLTSELVAI…AVIVARLTGA (141 aa)) folds into the PTS EIIA type-2 domain. His-62 serves as the catalytic Tele-phosphohistidine intermediate; for EIIA activity. Phosphohistidine; by HPr is present on His-62. The 89-residue stretch at 157–245 (AQGIDVVVTG…AFEAGLEDEE (89 aa)) folds into the HPr domain. Catalysis depends on His-171, which acts as the Pros-phosphohistidine intermediate; for HPr activity. At His-171 the chain carries Phosphohistidine; by EI. A PTS EI region spans residues 270–827 (EGRTLVGISS…TTAAEVRGLK (558 aa)). His-457 acts as the Tele-phosphohistidine intermediate; for PTS EI activity in catalysis. His-457 is subject to Phosphohistidine; by autocatalysis. Arg-564 and Arg-600 together coordinate phosphoenolpyruvate. Mg(2+) is bound by residues Glu-693 and Asp-717. Phosphoenolpyruvate-binding positions include 716-717 (ND) and Arg-727. Cys-764 functions as the Proton donor in the catalytic mechanism.

Belongs to the PEP-utilizing enzyme family. The cofactor is Mg(2+).

The protein resides in the cytoplasm. The catalysed reaction is L-histidyl-[protein] + phosphoenolpyruvate = N(pros)-phospho-L-histidyl-[protein] + pyruvate. The phosphoenolpyruvate-dependent sugar phosphotransferase system (sugar PTS), a major carbohydrate active transport system, catalyzes the phosphorylation of incoming sugar substrates concomitantly with their translocation across the cell membrane. The enzyme II FruAB PTS system is involved in fructose transport. The sequence is that of Multiphosphoryl transfer protein from Rhodobacter capsulatus (Rhodopseudomonas capsulata).